Here is a 551-residue protein sequence, read N- to C-terminus: Pentatricopeptide repeat-containing protein At3g13150 (551 aa).

Residues 22-67 (ATAKSAKPRSQTKSTKFPSKLKASTASVGDGGQSSNDAKDSKNSKL) are disordered. Polar residues predominate over residues 29–48 (PRSQTKSTKFPSKLKASTAS). Basic and acidic residues predominate over residues 58-67 (DAKDSKNSKL). 7 PPR repeats span residues 121–155 (SEDF…NCER), 156–191 (TVKS…GITP), 192–226 (DLVT…GFEP), 227–261 (DLIS…NLSP), 262–296 (NIRS…GISP), 297–331 (DVHT…GLTP), and 332–366 (DTVT…KLLS). Disordered stretches follow at residues 409–435 (GKKK…SPDT) and 449–551 (SSSD…LLDD). The span at 415–435 (SSPVSSSAKTTSTPVSSSPDT) shows a compositional bias: low complexity.

This sequence belongs to the PPR family. P subfamily.

In Arabidopsis thaliana (Mouse-ear cress), this protein is Pentatricopeptide repeat-containing protein At3g13150.